The primary structure comprises 256 residues: Hydroxyacylglutathione hydrolase (256 aa).

Zn(2+) is bound by residues histidine 55, histidine 57, aspartate 59, histidine 60, histidine 113, aspartate 132, and histidine 170.

Belongs to the metallo-beta-lactamase superfamily. Glyoxalase II family. In terms of assembly, monomer. Zn(2+) serves as cofactor.

The enzyme catalyses an S-(2-hydroxyacyl)glutathione + H2O = a 2-hydroxy carboxylate + glutathione + H(+). It functions in the pathway secondary metabolite metabolism; methylglyoxal degradation; (R)-lactate from methylglyoxal: step 2/2. Functionally, thiolesterase that catalyzes the hydrolysis of S-D-lactoyl-glutathione to form glutathione and D-lactic acid. The polypeptide is Hydroxyacylglutathione hydrolase (Methylococcus capsulatus (strain ATCC 33009 / NCIMB 11132 / Bath)).